A 309-amino-acid polypeptide reads, in one-letter code: Cilia-and flagella-associated protein 96 (309 aa).

A disordered region spans residues 220-249 (EEKKKTISNTFKPSSPGKKPGGMKAGTFDP).

The protein belongs to the CFAP96 family. Detected in testis and fetal liver.

Its subcellular location is the cytoplasm. It is found in the cytoskeleton. The protein resides in the microtubule organizing center. It localises to the centrosome. The polypeptide is Cilia-and flagella-associated protein 96 (Homo sapiens (Human)).